The sequence spans 399 residues: Maltose excess protein 1-like, chloroplastic (399 aa).

A chloroplast-targeting transit peptide spans 1 to 67 (MSSSVSSVRL…RRRRYALPPV (67 aa)). The next 9 helical transmembrane spans lie at 93-113 (FAGA…ILNA), 123-143 (ALFA…LSLL), 154-174 (AVIV…QLAM), 180-202 (LPQF…LNYF), 217-237 (ITIG…VPFI), 238-258 (PNSL…VVMA), 268-288 (INFV…WMPV), 306-326 (AFTM…AVFI), and 361-381 (FLAT…RDTI).

Its subcellular location is the plastid. It is found in the chloroplast inner membrane. Its function is as follows. Probable maltose transporter. Essential for the conversion of starch to sucrose in leaves at night, probably via the export of maltose from the chloroplast. This is Maltose excess protein 1-like, chloroplastic from Oryza sativa subsp. japonica (Rice).